We begin with the raw amino-acid sequence, 280 residues long: Pupal cuticle protein 36a (280 aa).

Residues 1–15 form the signal peptide; the sequence is MKLFVLAAVLGVCLA. The region spanning 135–198 is the Chitin-binding type R&amp;R domain; sequence AEGFAYDFET…SQGAHLPTPP (64 aa). The interval 258-280 is disordered; it reads GAGRAGGTATSASEAPTTTIRLM.

This Manduca sexta (Tobacco hawkmoth) protein is Pupal cuticle protein 36a (PCP36a).